The sequence spans 393 residues: MAAGPAGIVWQTPANPPERQDYIFRDGRRYVRPYYFEFISHVKNRWAGKTIVDLFTDEFKGRPREYYVHAVKCGRLQVDDQMVHADYVVQSSQKISHFLHRHEPPVLGGDITILQNEADVVTVCKPASVPVHPCGQYRKNTVVGILQAEHGLVPLFPVHRLDRLVSGLLIFAKNADKAESFRQQIEASLLQKEYVAKVVGVFPDGEQTVNANVHFNAREGRSTAEVCDGDGKAPIGKQACTKFQRICTDGIHSIVLCKPVTGRTHQIRVHLKHIGYPIANDEVYLSENFSPRSSKGTRINRATTLACSLPSSDPDSCADLGNNDTNEDTEADEEFSIDPMCTNCPNLAPVGYDADEEALWLHCVRYTGPDWSYECPYPDWAFLDNVSRKKLKS.

The S4 RNA-binding domain maps to 49 to 118; the sequence is KTIVDLFTDE…GDITILQNEA (70 aa). Residue Asp162 is part of the active site.

This sequence belongs to the pseudouridine synthase RluA family.

It catalyses the reaction a uridine in RNA = a pseudouridine in RNA. This chain is RNA pseudouridine synthase 7, found in Oryza sativa subsp. japonica (Rice).